Reading from the N-terminus, the 429-residue chain is 3-phosphoshikimate 1-carboxyvinyltransferase (429 aa).

3-phosphoshikimate is bound by residues K20, S21, and R25. Phosphoenolpyruvate is bound at residue K20. G89 and R118 together coordinate phosphoenolpyruvate. 6 residues coordinate 3-phosphoshikimate: S164, S165, Q166, S192, D311, and K338. Residue Q166 coordinates phosphoenolpyruvate. D311 acts as the Proton acceptor in catalysis. 2 residues coordinate phosphoenolpyruvate: R342 and R384.

Belongs to the EPSP synthase family. As to quaternary structure, monomer.

It is found in the cytoplasm. The enzyme catalyses 3-phosphoshikimate + phosphoenolpyruvate = 5-O-(1-carboxyvinyl)-3-phosphoshikimate + phosphate. Its pathway is metabolic intermediate biosynthesis; chorismate biosynthesis. In terms of biological role, catalyzes the transfer of the enolpyruvyl moiety of phosphoenolpyruvate (PEP) to the 5-hydroxyl of shikimate-3-phosphate (S3P) to produce enolpyruvyl shikimate-3-phosphate and inorganic phosphate. The sequence is that of 3-phosphoshikimate 1-carboxyvinyltransferase from Methanococcus maripaludis (strain C6 / ATCC BAA-1332).